The primary structure comprises 184 residues: NADH-quinone oxidoreductase subunit B (184 aa).

Residues cysteine 37, cysteine 38, cysteine 103, and cysteine 132 each coordinate [4Fe-4S] cluster.

The protein belongs to the complex I 20 kDa subunit family. In terms of assembly, NDH-1 is composed of 14 different subunits. Subunits NuoB, C, D, E, F, and G constitute the peripheral sector of the complex. The cofactor is [4Fe-4S] cluster.

The protein localises to the cell membrane. The enzyme catalyses a quinone + NADH + 5 H(+)(in) = a quinol + NAD(+) + 4 H(+)(out). In terms of biological role, NDH-1 shuttles electrons from NADH, via FMN and iron-sulfur (Fe-S) centers, to quinones in the respiratory chain. The immediate electron acceptor for the enzyme in this species is believed to be a menaquinone. Couples the redox reaction to proton translocation (for every two electrons transferred, four hydrogen ions are translocated across the cytoplasmic membrane), and thus conserves the redox energy in a proton gradient. The protein is NADH-quinone oxidoreductase subunit B of Mycobacterium marinum (strain ATCC BAA-535 / M).